The sequence spans 182 residues: ATP synthase subunit delta (182 aa).

This sequence belongs to the ATPase delta chain family. F-type ATPases have 2 components, F(1) - the catalytic core - and F(0) - the membrane proton channel. F(1) has five subunits: alpha(3), beta(3), gamma(1), delta(1), epsilon(1). F(0) has three main subunits: a(1), b(2) and c(10-14). The alpha and beta chains form an alternating ring which encloses part of the gamma chain. F(1) is attached to F(0) by a central stalk formed by the gamma and epsilon chains, while a peripheral stalk is formed by the delta and b chains.

Its subcellular location is the cell membrane. Its function is as follows. F(1)F(0) ATP synthase produces ATP from ADP in the presence of a proton or sodium gradient. F-type ATPases consist of two structural domains, F(1) containing the extramembraneous catalytic core and F(0) containing the membrane proton channel, linked together by a central stalk and a peripheral stalk. During catalysis, ATP synthesis in the catalytic domain of F(1) is coupled via a rotary mechanism of the central stalk subunits to proton translocation. Functionally, this protein is part of the stalk that links CF(0) to CF(1). It either transmits conformational changes from CF(0) to CF(1) or is implicated in proton conduction. In Lachnoclostridium phytofermentans (strain ATCC 700394 / DSM 18823 / ISDg) (Clostridium phytofermentans), this protein is ATP synthase subunit delta.